A 537-amino-acid chain; its full sequence is Interleukin-2 receptor subunit beta (537 aa).

An N-terminal signal peptide occupies residues 1–26 (MATVDLSWRLPLYILLLLLATTWVSA). Over 27-239 (AVNDCSHLKC…FRTRPADPKE (213 aa)) the chain is Extracellular. Cysteine 36 and cysteine 46 are joined by a disulfide. Asparagine 43, asparagine 55, and asparagine 71 each carry an N-linked (GlcNAc...) asparagine glycan. Cysteine 74 and cysteine 86 form a disulfide bridge. Positions 135 to 235 (APHSLQVLHI…QPMAFRTRPA (101 aa)) constitute a Fibronectin type-III domain. The N-linked (GlcNAc...) asparagine glycan is linked to asparagine 150. The WSXWS motif signature appears at 221–225 (WSPWS). A helical transmembrane segment spans residues 240 to 267 (IFPLPWLRCLLLVLGCFFGFLSCVCVLV). Over 268–537 (KCRYLGPWLK…LQAQDSAHLI (270 aa)) the chain is Cytoplasmic. Residues 280–288 (LKCHIPDPS) carry the Box 1 motif motif. Disordered regions lie at residues 442–466 (AYGN…SLAS) and 479–498 (ELGD…QASV). The span at 487-497 (MSTNSSGQQAS) shows a compositional bias: polar residues.

The protein belongs to the type I cytokine receptor family. Type 4 subfamily. In terms of assembly, non-covalent dimer of an alpha and a beta subunit. IL2R exists in 3 different forms: a high affinity dimer, an intermediate affinity monomer (beta subunit), and a low affinity monomer (alpha subunit). The high and intermediate affinity forms also associate with a gamma subunit. Interacts with SHB upon interleukin stimulation.

Its subcellular location is the cell membrane. The protein localises to the cell surface. Receptor for interleukin-2. This beta subunit is involved in receptor mediated endocytosis and transduces the mitogenic signals of IL2. Probably in association with IL15RA, involved in the stimulation of neutrophil phagocytosis by IL15. The chain is Interleukin-2 receptor subunit beta (Il2rb) from Rattus norvegicus (Rat).